We begin with the raw amino-acid sequence, 349 residues long: Secretory carrier-associated membrane protein 3 (349 aa).

The tract at residues 1-90 (MAQSRDTGNP…EPRNYGSYST (90 aa)) is disordered. Residues 1–168 (MAQSRDTGNP…PQEFQKTVST (168 aa)) lie on the Cytoplasmic side of the membrane. S32 carries the post-translational modification Phosphoserine. Phosphothreonine is present on T37. 2 positions are modified to phosphotyrosine: Y41 and Y53. Pro residues predominate over residues 49–68 (PPPAYEPPAPAPAPLPPPSA). Phosphoserine occurs at positions 74 and 78. Y85 is subject to Phosphotyrosine. Position 87 is a phosphoserine (S87). 4 consecutive transmembrane segments (helical) span residues 169-189 (MYYL…ACLA), 200-220 (GFGL…VCWY), 236-256 (FVFF…AIGI), and 277-297 (VAVL…LGIV). Residues 298–349 (MLKRIHSLYRQTGASFQKAQQEFAAGVFSNPAVRTAAANAAAGAAENAFRAP) lie on the Cytoplasmic side of the membrane. Residue K315 forms a Glycyl lysine isopeptide (Lys-Gly) (interchain with G-Cter in SUMO1) linkage.

This sequence belongs to the SCAMP family. Interacts with NEDD4 and NEDD4L and TSG101. Interacts with RNF126. Post-translationally, monoubiquitinated.

The protein localises to the membrane. Functionally, functions in post-Golgi recycling pathways. Acts as a recycling carrier to the cell surface. This chain is Secretory carrier-associated membrane protein 3 (Scamp3), found in Mus musculus (Mouse).